The following is a 79-amino-acid chain: Dolichyl-diphosphooligosaccharide--protein glycosyltransferase subunit TMEM258 (79 aa).

2 consecutive transmembrane segments (helical) span residues 17–37 (VFPHLTVVLLAIGMFFTAWFF) and 55–75 (LISLVASLFMGFGVLFLLLWV).

Belongs to the OST5 family. As to quaternary structure, component of the oligosaccharyltransferase (OST) complex.

Its subcellular location is the membrane. The protein resides in the endoplasmic reticulum. The protein localises to the cytoplasm. It participates in protein modification; protein glycosylation. In terms of biological role, subunit of the oligosaccharyl transferase (OST) complex that catalyzes the initial transfer of a defined glycan (Glc(3)Man(9)GlcNAc(2) in eukaryotes) from the lipid carrier dolichol-pyrophosphate to an asparagine residue within an Asn-X-Ser/Thr consensus motif in nascent polypeptide chains, the first step in protein N-glycosylation. N-glycosylation occurs cotranslationally and the complex associates with the Sec61 complex at the channel-forming translocon complex that mediates protein translocation across the endoplasmic reticulum (ER). All subunits are required for a maximal enzyme activity. The sequence is that of Dolichyl-diphosphooligosaccharide--protein glycosyltransferase subunit TMEM258 from Xenopus laevis (African clawed frog).